The chain runs to 183 residues: Adenine phosphoribosyltransferase (183 aa).

This sequence belongs to the purine/pyrimidine phosphoribosyltransferase family. Homodimer.

The protein resides in the cytoplasm. It carries out the reaction AMP + diphosphate = 5-phospho-alpha-D-ribose 1-diphosphate + adenine. Its pathway is purine metabolism; AMP biosynthesis via salvage pathway; AMP from adenine: step 1/1. Its function is as follows. Catalyzes a salvage reaction resulting in the formation of AMP, that is energically less costly than de novo synthesis. The polypeptide is Adenine phosphoribosyltransferase (Shewanella sp. (strain MR-7)).